The following is a 133-amino-acid chain: p53 and DNA damage-regulated protein 1 (133 aa).

The protein belongs to the prefoldin subunit beta family. Component of the PAQosome complex which is responsible for the biogenesis of several protein complexes and which consists of R2TP complex members RUVBL1, RUVBL2, RPAP3 and PIH1D1, URI complex members PFDN2, PFDN6, PDRG1, UXT and URI1 as well as ASDURF, POLR2E and DNAAF10/WDR92.

It is found in the cytoplasm. In terms of biological role, may play a role in chaperone-mediated protein folding. This Mus musculus (Mouse) protein is p53 and DNA damage-regulated protein 1 (Pdrg1).